We begin with the raw amino-acid sequence, 337 residues long: Holliday junction branch migration complex subunit RuvB (337 aa).

The segment at 1–179 (MTHQVAVLHQ…FAFSARLSYY (179 aa)) is large ATPase domain (RuvB-L). Residues leucine 18, arginine 19, glycine 60, lysine 63, threonine 64, serine 65, 126-128 (EDF), arginine 169, tyrosine 179, and arginine 216 each bind ATP. A Mg(2+)-binding site is contributed by threonine 64. A small ATPAse domain (RuvB-S) region spans residues 180–250 (SDQDLKEILV…VAEKALAMLL (71 aa)). The segment at 253 to 337 (DWGLNEIDIK…KNLLSLGEGQ (85 aa)) is head domain (RuvB-H). Residues lysine 308 and arginine 313 each coordinate DNA.

It belongs to the RuvB family. Homohexamer. Forms an RuvA(8)-RuvB(12)-Holliday junction (HJ) complex. HJ DNA is sandwiched between 2 RuvA tetramers; dsDNA enters through RuvA and exits via RuvB. An RuvB hexamer assembles on each DNA strand where it exits the tetramer. Each RuvB hexamer is contacted by two RuvA subunits (via domain III) on 2 adjacent RuvB subunits; this complex drives branch migration. In the full resolvosome a probable DNA-RuvA(4)-RuvB(12)-RuvC(2) complex forms which resolves the HJ.

The protein localises to the cytoplasm. It carries out the reaction ATP + H2O = ADP + phosphate + H(+). In terms of biological role, the RuvA-RuvB-RuvC complex processes Holliday junction (HJ) DNA during genetic recombination and DNA repair, while the RuvA-RuvB complex plays an important role in the rescue of blocked DNA replication forks via replication fork reversal (RFR). RuvA specifically binds to HJ cruciform DNA, conferring on it an open structure. The RuvB hexamer acts as an ATP-dependent pump, pulling dsDNA into and through the RuvAB complex. RuvB forms 2 homohexamers on either side of HJ DNA bound by 1 or 2 RuvA tetramers; 4 subunits per hexamer contact DNA at a time. Coordinated motions by a converter formed by DNA-disengaged RuvB subunits stimulates ATP hydrolysis and nucleotide exchange. Immobilization of the converter enables RuvB to convert the ATP-contained energy into a lever motion, pulling 2 nucleotides of DNA out of the RuvA tetramer per ATP hydrolyzed, thus driving DNA branch migration. The RuvB motors rotate together with the DNA substrate, which together with the progressing nucleotide cycle form the mechanistic basis for DNA recombination by continuous HJ branch migration. Branch migration allows RuvC to scan DNA until it finds its consensus sequence, where it cleaves and resolves cruciform DNA. This chain is Holliday junction branch migration complex subunit RuvB, found in Chlamydia pneumoniae (Chlamydophila pneumoniae).